The sequence spans 277 residues: MGIKVYKPTTNGRRNMTSLDFAEITTNTPEKSLLVSLKNKAGRNNNGRITVRHQGGGHKRHYRLIDFKRNKDGVEAVVKTIEYDPNRTANIALVHYTDGVKAYILAPKGLEVGQRIISGPEADIKVGNALPLANIPVGTVIHNIELQPGKGAELIRAAGASAQVLGQEGKYVLVRLQSGEVRMILGTCRATIGTVGNEQQSLVNIGKAGRNRWKGVRPTVRGSVMNPNDHPHGGGEGKAPVGRKAPSTPWGKPALGLKTRNKKAKSDKLIVRRRNQK.

A disordered region spans residues 222–277 (GSVMNPNDHPHGGGEGKAPVGRKAPSTPWGKPALGLKTRNKKAKSDKLIVRRRNQK).

This sequence belongs to the universal ribosomal protein uL2 family. As to quaternary structure, part of the 50S ribosomal subunit. Forms a bridge to the 30S subunit in the 70S ribosome.

Its function is as follows. One of the primary rRNA binding proteins. Required for association of the 30S and 50S subunits to form the 70S ribosome, for tRNA binding and peptide bond formation. It has been suggested to have peptidyltransferase activity; this is somewhat controversial. Makes several contacts with the 16S rRNA in the 70S ribosome. In Streptococcus agalactiae serotype Ia (strain ATCC 27591 / A909 / CDC SS700), this protein is Large ribosomal subunit protein uL2.